Reading from the N-terminus, the 359-residue chain is UPF0283 membrane protein Rleg2_1967 (359 aa).

Positions 1–43 (MSKPPSDPPRRPPAAFTYEDEATERHDNGRQAERRRKPESFSE) are disordered. Basic and acidic residues predominate over residues 23–40 (TERHDNGRQAERRRKPES). A run of 2 helical transmembrane segments spans residues 77-97 (FGKI…GLWT) and 111-131 (LGYL…ALVI).

It belongs to the UPF0283 family.

The protein localises to the cell inner membrane. The polypeptide is UPF0283 membrane protein Rleg2_1967 (Rhizobium leguminosarum bv. trifolii (strain WSM2304)).